The sequence spans 1046 residues: Translation initiation factor IF-2 (1046 aa).

The segment at 49-448 (EAFPAEGSAP…MGAMVPRGNG (400 aa)) is disordered. Residues 52 to 71 (PAEGSAPSSRPGGRPGNGAR) are compositionally biased toward low complexity. Residues 94–111 (RPGPGGRPVPGRPGPAPL) show a composition bias toward pro residues. Low complexity-rich tracts occupy residues 112–139 (PGAS…SQPV) and 147–159 (PRPA…AAAP). The segment covering 160 to 176 (APAPSAPAPAPSAPAPA) has biased composition (pro residues). A compositionally biased stretch (low complexity) spans 177–187 (PITSAPTAATP). Positions 188-206 (PAAPQRPTPGGPRPGPAAP) are enriched in pro residues. Residues 210–222 (RTGGPGGPGGPGG) show a composition bias toward gly residues. Over residues 223–235 (GPRPGPRPGPRPA) the composition is skewed to pro residues. Residues 244 to 253 (SPAAGPRAAS) are compositionally biased toward low complexity. Pro residues-rich tracts occupy residues 260-281 (SAPP…PRPG) and 304-314 (RPTPGQMPPRP). Over residues 320 to 333 (PRPNSNMFQPRPAG) the composition is skewed to low complexity. Residues 334 to 414 (GAPGRPGGGG…AGAFGPGGRG (81 aa)) are compositionally biased toward gly residues. The span at 415 to 426 (RPGRQRKSKRAK) shows a compositional bias: basic residues. The 173-residue stretch at 539–711 (ARPPVVTVMG…VILTADASLD (173 aa)) folds into the tr-type G domain. The segment at 548–555 (GHVDHGKT) is G1. Residue 548–555 (GHVDHGKT) participates in GTP binding. Residues 573 to 577 (GITQH) form a G2 region. A G3 region spans residues 598–601 (DTPG). GTP contacts are provided by residues 598-602 (DTPGH) and 652-655 (NKVD). The segment at 652–655 (NKVD) is G4. The segment at 688-690 (SAR) is G5.

The protein belongs to the TRAFAC class translation factor GTPase superfamily. Classic translation factor GTPase family. IF-2 subfamily.

The protein resides in the cytoplasm. Its function is as follows. One of the essential components for the initiation of protein synthesis. Protects formylmethionyl-tRNA from spontaneous hydrolysis and promotes its binding to the 30S ribosomal subunits. Also involved in the hydrolysis of GTP during the formation of the 70S ribosomal complex. This chain is Translation initiation factor IF-2, found in Parafrankia sp. (strain EAN1pec).